Here is a 188-residue protein sequence, read N- to C-terminus: Pyridoxal 5'-phosphate synthase subunit PdxT (188 aa).

47–49 is an L-glutamine binding site; it reads GES. Cysteine 79 functions as the Nucleophile in the catalytic mechanism. Residues arginine 105 and 134-135 contribute to the L-glutamine site; that span reads IR. Active-site charge relay system residues include histidine 170 and glutamate 172.

The protein belongs to the glutaminase PdxT/SNO family. As to quaternary structure, in the presence of PdxS, forms a dodecamer of heterodimers. Only shows activity in the heterodimer.

The enzyme catalyses aldehydo-D-ribose 5-phosphate + D-glyceraldehyde 3-phosphate + L-glutamine = pyridoxal 5'-phosphate + L-glutamate + phosphate + 3 H2O + H(+). The catalysed reaction is L-glutamine + H2O = L-glutamate + NH4(+). It functions in the pathway cofactor biosynthesis; pyridoxal 5'-phosphate biosynthesis. In terms of biological role, catalyzes the hydrolysis of glutamine to glutamate and ammonia as part of the biosynthesis of pyridoxal 5'-phosphate. The resulting ammonia molecule is channeled to the active site of PdxS. This Listeria monocytogenes serovar 1/2a (strain ATCC BAA-679 / EGD-e) protein is Pyridoxal 5'-phosphate synthase subunit PdxT.